The sequence spans 209 residues: Thymidylate kinase (209 aa).

10–17 (GPEGAGKT) provides a ligand contact to ATP.

Belongs to the thymidylate kinase family.

The enzyme catalyses dTMP + ATP = dTDP + ADP. In terms of biological role, phosphorylation of dTMP to form dTDP in both de novo and salvage pathways of dTTP synthesis. The sequence is that of Thymidylate kinase from Anoxybacillus flavithermus (strain DSM 21510 / WK1).